The chain runs to 146 residues: Hemoglobin subunit delta (146 aa).

Positions 2–146 (HLTGDEKSAV…VATALAHKYH (145 aa)) constitute a Globin domain. Serine 50 carries the phosphoserine modification. The heme b site is built by histidine 63 and histidine 92.

The protein belongs to the globin family. As to quaternary structure, heterotetramer of two delta chains and two alpha chains. As to expression, red blood cells.

The chain is Hemoglobin subunit delta (HBD) from Aotus trivirgatus (Three-striped night monkey).